The primary structure comprises 91 residues: Dynein 8 kDa light chain, flagellar outer arm (91 aa).

This sequence belongs to the dynein light chain family. In terms of assembly, consists of at least 3 heavy chains (alpha, beta and gamma), 2 intermediate chains and 8 light chains.

Its subcellular location is the cytoplasm. It localises to the cytoskeleton. The protein localises to the flagellum axoneme. This chain is Dynein 8 kDa light chain, flagellar outer arm, found in Chlamydomonas reinhardtii (Chlamydomonas smithii).